The sequence spans 634 residues: Zinc finger and BTB domain-containing protein 22 (634 aa).

A BTB domain is found at 57–121; it reads CDVSIRVQGR…AYTGRLSMAA (65 aa). 2 disordered regions span residues 167–247 and 308–461; these read TVPG…APVV and APTP…GTSV. Low complexity predominate over residues 180-198; that stretch reads TVAPATMGSARSHASSRAS. A compositionally biased stretch (polar residues) spans 199–209; it reads ENQSPSSSNYF. S202 bears the Phosphoserine mark. Positions 217-229 are enriched in low complexity; it reads FSSSSQEAFAASA. The span at 317–340 shows a compositional bias: acidic residues; sequence PDLEEEEEEEDLVLTCEDDEDEEL. Low complexity predominate over residues 452 to 461; it reads GAVTVGGTSV. The segment at 486–507 adopts a C2H2-type 1; atypical zinc-finger fold; the sequence is FLCHCGKAFSHKSMRDRHVNMH. 2 consecutive C2H2-type zinc fingers follow at residues 513 to 535 and 541 to 562; these read FDCP…MKTH and YECG…HRGH. The disordered stretch occupies residues 568–634; that stretch reads RLGGVGAVPG…MGFGGGGGAN (67 aa). The span at 608-618 shows a compositional bias: low complexity; the sequence is PPSSRRVWSPP.

It belongs to the krueppel C2H2-type zinc-finger protein family.

It localises to the nucleus. Its function is as follows. May be involved in transcriptional regulation. This is Zinc finger and BTB domain-containing protein 22 (ZBTB22) from Homo sapiens (Human).